The chain runs to 515 residues: Phospholipase A1-Igamma1, chloroplastic (515 aa).

Residues 1–44 constitute a chloroplast transit peptide; the sequence is MATIPSHNLRPHTTNQRTQYSLSFRPHFSRSTLITFPARSSPAR. A GXSXG motif is present at residues 301-305; sequence GHSLG. S303 functions as the Acyl-ester intermediate in the catalytic mechanism. Residues D366 and H422 each act as charge relay system in the active site.

The protein belongs to the AB hydrolase superfamily. Lipase family. As to expression, ubiquitous. Highly expressed in leaves.

It is found in the plastid. The protein localises to the chloroplast. It carries out the reaction 1,2-dihexadecanoyl-sn-glycero-3-phosphocholine + H2O = 2-hexadecanoyl-sn-glycero-3-phosphocholine + hexadecanoate + H(+). The enzyme catalyses a 1,2-diacyl-3-O-(beta-D-galactosyl)-sn-glycerol + H2O = an acyl-3-O-(beta-D-galactosyl)-sn-glycerol + a fatty acid + H(+). It catalyses the reaction a 1,2-diacyl-3-O-[alpha-D-galactosyl-(1-&gt;6)-beta-D-galactosyl]-sn-glycerol + H2O = acyl-3-O-[alpha-D-galactosyl-(1-&gt;6)-beta-D-galactosyl]-sn-glycerol + a fatty acid + H(+). In terms of biological role, acylhydrolase with a broad specificity. Catalyzes the hydrolysis of phosphatidylcholine at the sn-1 position. Moderate activity toward phosphatidylcholine (PC), monogalactosyldiacylglycerol (MGDG), digalactosyldiacylglycerol (DGDG) and triacylglycerol (TAG). May display dual sn-1/sn-2 substrate specificity. Could be involved in early wound response. The protein is Phospholipase A1-Igamma1, chloroplastic of Arabidopsis thaliana (Mouse-ear cress).